Here is a 214-residue protein sequence, read N- to C-terminus: Calcineurin B homologous protein 3 (214 aa).

A lipid anchor (N-myristoyl glycine) is attached at glycine 2. Residues 110–145 (CRTDKLRFLFNMYDSDNDNKITLEEYRKVVEELLSG) enclose the EF-hand domain. The Ca(2+) site is built by aspartate 123, aspartate 125, aspartate 127, lysine 129, and glutamate 134.

It belongs to the calcineurin regulatory subunit family. CHP subfamily. As to quaternary structure, monomer. Homodimer.

It localises to the nucleus. It is found in the cytoplasm. Its subcellular location is the membrane. The protein resides in the cell membrane. The protein localises to the cell projection. It localises to the lamellipodium. It is found in the ruffle membrane. Functions as an integral cofactor in cell pH regulation by controlling plasma membrane-type Na(+)/H(+) exchange activity. Promotes the induction of hematopoietic stem cell differentiation toward megakaryocytic lineage. Essential for the coupling of ERK cascade activation with the expression of ETS family genes in megakaryocytic differentiation. Also involved in granulocytic differentiation in a ERK-dependent manner. Inhibits the phosphatase activity of calcineurin. The chain is Calcineurin B homologous protein 3 from Xenopus laevis (African clawed frog).